A 506-amino-acid polypeptide reads, in one-letter code: Putative basic amino acid antiporter YfcC (506 aa).

13 helical membrane-spanning segments follow: residues Leu-19–Gly-39, Gly-107–Met-127, Ile-148–Gly-168, Ala-171–Thr-191, Trp-208–Gly-228, Leu-231–Ala-251, Trp-287–Asn-307, Phe-310–Val-330, Met-352–Asn-372, Ala-398–Gly-418, Ser-419–Asn-439, Val-442–Ala-462, and Leu-485–Tyr-505.

The protein to H.influenzae HI_0594. It to B.subtilis YcgA.

It is found in the cell inner membrane. Metabolomic profiling of different yfcC over-expression and deletion strains suggests that it may affect the glyoxylate shunt. This chain is Putative basic amino acid antiporter YfcC (yfcC), found in Escherichia coli (strain K12).